A 552-amino-acid chain; its full sequence is Kumamolisin (552 aa).

Residues 1–17 (MSDMEKPWKEEEKREVL) show a composition bias toward basic and acidic residues. Residues 1-34 (MSDMEKPWKEEEKREVLAGHARRQAPQAVDKGPV) are disordered. The Peptidase S53 domain maps to 193 to 546 (AYTPLDVAQA…IRLLQALLPS (354 aa)). Catalysis depends on charge relay system residues glutamate 266, aspartate 270, and serine 466. Ca(2+) contacts are provided by aspartate 504, isoleucine 505, glycine 522, glycine 524, and aspartate 526.

In terms of assembly, forms monomeric and dimeric crystals. Requires Ca(2+) as cofactor. Autocatalytically processed.

The protein resides in the secreted. The enzyme catalyses The enzyme preferentially hydrolyzes peptides having an Ala or Pro residue at P2 position and prefers such charged amino acid residues as Glu or Arg at the P2' position. In the oxidized insulin B chain, kumamolysin preferentially cleaves between Leu(15) and Tyr(16).. Inactivated at 22.4 and 37 degrees Celsius, but not at 60 degrees Celsius, by aldehyde-type inhibitors such as acetyl-Ile-Ala-Phe-CHO and acetyl-Ile-Pro-Phe-CHO. Insensitive to the known carboxyl proteinase inhibitors pepstatin, diazoacetyl-DL-norleucine methyl ester (DAN) and 1,2-epoxy-3-(p-nitrophenoxy)propane (EPNP). Not inhibited by Ala-Ala-Phe-chloromethylketone, an inhibitor of the human tripeptidyl-peptidase 1. Thermostable pepstatin-insensitive serine-carboxyl proteinase. Preferentially hydrolyzes synthetic peptides having an Ala or Pro residue at the P2 position and charged amino acids such as Glu or Arg at the P2' position. In vitro, specifically hydrolyzes the Leu-15-Tyr-16 peptide bond in oxidized insulin B-chain. Additional cleavage of oxidized insulin B-chain at Phe-25-Tyr-26 is detected at a considerably lower rate. Can hydrolyze collagen and the chromogenic substrate azocoll. Shows lower activity with albumin and casein. Shows very weak tripeptidyl peptidase activity. In Bacillus sp. (strain MN-32), this protein is Kumamolisin.